The following is a 115-amino-acid chain: U3-lycotoxin-Ls1a (115 aa).

The N-terminal stretch at 1 to 20 is a signal peptide; that stretch reads MKFVLLFGVLLVTLFSYSSA. A propeptide spanning residues 21–44 is cleaved from the precursor; that stretch reads EMLDDFDQADEDELLSSIEKEEAR. Disulfide bonds link cysteine 48–cysteine 63, cysteine 55–cysteine 72, cysteine 62–cysteine 87, and cysteine 74–cysteine 85.

It belongs to the neurotoxin 19 (CSTX) family. 01 subfamily. In terms of tissue distribution, expressed by the venom gland.

The protein localises to the secreted. The chain is U3-lycotoxin-Ls1a from Lycosa singoriensis (Wolf spider).